A 218-amino-acid chain; its full sequence is Small ribosomal subunit protein mS34 (218 aa).

The segment at 180 to 218 (KNGDTSTEEPMLNVQRIRMEPWDYPAKQEDKGRAKGTPV) is disordered. The segment covering 196 to 212 (IRMEPWDYPAKQEDKGR) has biased composition (basic and acidic residues).

Belongs to the mitochondrion-specific ribosomal protein mS34 family. Component of the mitochondrial small ribosomal subunit (mt-SSU). Mature mammalian 55S mitochondrial ribosomes consist of a small (28S) and a large (39S) subunit. The 28S small subunit contains a 12S ribosomal RNA (12S mt-rRNA) and 30 different proteins. The 39S large subunit contains a 16S rRNA (16S mt-rRNA), a copy of mitochondrial valine transfer RNA (mt-tRNA(Val)), which plays an integral structural role, and 52 different proteins.

Its subcellular location is the mitochondrion. Required for mitochondrial translation, plays a role in maintaining the stability of the small ribosomal subunit and the 12S rRNA that are required for mitoribosome formation. This chain is Small ribosomal subunit protein mS34 (MRPS34), found in Homo sapiens (Human).